Consider the following 142-residue polypeptide: Small heat shock protein IbpB (142 aa).

One can recognise a sHSP domain in the interval 26–137 (AGESQSFPPY…APQRIAISER (112 aa)).

It belongs to the small heat shock protein (HSP20) family. In terms of assembly, homodimer. Forms homomultimers of about 100-150 subunits at optimal growth temperatures. Conformation changes to oligomers at high temperatures or high ionic concentrations. The decrease in size of the multimers is accompanied by an increase in chaperone activity.

The protein localises to the cytoplasm. Associates with aggregated proteins, together with IbpA, to stabilize and protect them from irreversible denaturation and extensive proteolysis during heat shock and oxidative stress. Aggregated proteins bound to the IbpAB complex are more efficiently refolded and reactivated by the ATP-dependent chaperone systems ClpB and DnaK/DnaJ/GrpE. Its activity is ATP-independent. The chain is Small heat shock protein IbpB from Klebsiella pneumoniae (strain 342).